Here is a 597-residue protein sequence, read N- to C-terminus: Arginine--tRNA ligase (597 aa).

The short motif at 137 to 147 (PNIAKEMHVGH) is the 'HIGH' region element.

The protein belongs to the class-I aminoacyl-tRNA synthetase family. In terms of assembly, monomer.

It is found in the cytoplasm. It carries out the reaction tRNA(Arg) + L-arginine + ATP = L-arginyl-tRNA(Arg) + AMP + diphosphate. This chain is Arginine--tRNA ligase, found in Parasynechococcus marenigrum (strain WH8102).